We begin with the raw amino-acid sequence, 378 residues long: Glutamate 5-kinase (378 aa).

Lys19 is an ATP binding site. Residues Ser59, Asp146, and Asn158 each contribute to the substrate site. Residue 178 to 179 (TD) participates in ATP binding. A PUA domain is found at 285 to 363 (RGSVTVDPGA…SEFEKLLGYT (79 aa)).

This sequence belongs to the glutamate 5-kinase family.

Its subcellular location is the cytoplasm. The catalysed reaction is L-glutamate + ATP = L-glutamyl 5-phosphate + ADP. The protein operates within amino-acid biosynthesis; L-proline biosynthesis; L-glutamate 5-semialdehyde from L-glutamate: step 1/2. Catalyzes the transfer of a phosphate group to glutamate to form L-glutamate 5-phosphate. This Polaromonas naphthalenivorans (strain CJ2) protein is Glutamate 5-kinase.